The following is a 401-amino-acid chain: Probable tRNA sulfurtransferase (401 aa).

The region spanning 60 to 165 (EPIIDKLKNV…QEGTYITCHD (106 aa)) is the THUMP domain. ATP is bound by residues 183-184 (ML), 208-209 (HF), Arg-265, Gly-287, and Gln-296.

It belongs to the ThiI family.

It localises to the cytoplasm. The enzyme catalyses [ThiI sulfur-carrier protein]-S-sulfanyl-L-cysteine + a uridine in tRNA + 2 reduced [2Fe-2S]-[ferredoxin] + ATP + H(+) = [ThiI sulfur-carrier protein]-L-cysteine + a 4-thiouridine in tRNA + 2 oxidized [2Fe-2S]-[ferredoxin] + AMP + diphosphate. It carries out the reaction [ThiS sulfur-carrier protein]-C-terminal Gly-Gly-AMP + S-sulfanyl-L-cysteinyl-[cysteine desulfurase] + AH2 = [ThiS sulfur-carrier protein]-C-terminal-Gly-aminoethanethioate + L-cysteinyl-[cysteine desulfurase] + A + AMP + 2 H(+). It functions in the pathway cofactor biosynthesis; thiamine diphosphate biosynthesis. In terms of biological role, catalyzes the ATP-dependent transfer of a sulfur to tRNA to produce 4-thiouridine in position 8 of tRNAs, which functions as a near-UV photosensor. Also catalyzes the transfer of sulfur to the sulfur carrier protein ThiS, forming ThiS-thiocarboxylate. This is a step in the synthesis of thiazole, in the thiamine biosynthesis pathway. The sulfur is donated as persulfide by IscS. This chain is Probable tRNA sulfurtransferase, found in Geobacillus sp. (strain WCH70).